The primary structure comprises 185 residues: Ribosome-recycling factor (185 aa).

It belongs to the RRF family.

Its subcellular location is the cytoplasm. Its function is as follows. Responsible for the release of ribosomes from messenger RNA at the termination of protein biosynthesis. May increase the efficiency of translation by recycling ribosomes from one round of translation to another. The chain is Ribosome-recycling factor from Edwardsiella ictaluri (strain 93-146).